The sequence spans 338 residues: Protein mono-ADP-ribosyltransferase PARP11 (338 aa).

Glu13 is subject to ADP-ribosyl glutamic acid. An N6-(ADP-ribosyl)lysine modification is found at Lys18. The WWE domain maps to 22–106 (NEVDDMDTSD…TTGKQRLIKR (85 aa)). Residues Cys56 and Cys72 each carry the ADP-ribosylcysteine modification. Asp87 is subject to ADP-ribosyl aspartic acid. The region spanning 123–338 (IPMPPHWENV…IYPEYLIDFH (216 aa)) is the PARP catalytic domain.

The protein belongs to the ARTD/PARP family. In terms of assembly, interacts with PARP12; this interaction plays a role in zika virus suppression. Post-translationally, auto-mono-ADP-ribosylated.

It is found in the nucleus. The protein localises to the nuclear pore complex. It catalyses the reaction L-aspartyl-[protein] + NAD(+) = 4-O-(ADP-D-ribosyl)-L-aspartyl-[protein] + nicotinamide. The catalysed reaction is L-cysteinyl-[protein] + NAD(+) = S-(ADP-D-ribosyl)-L-cysteinyl-[protein] + nicotinamide + H(+). The enzyme catalyses L-glutamyl-[protein] + NAD(+) = 5-O-(ADP-D-ribosyl)-L-glutamyl-[protein] + nicotinamide. It carries out the reaction L-lysyl-[protein] + NAD(+) = N(6)-(ADP-D-ribosyl)-L-lysyl-[protein] + nicotinamide + H(+). Mono-ADP-ribosyltransferase that mediates mono-ADP-ribosylation of target proteins. Plays a role in nuclear envelope stability and nuclear remodeling during spermiogenesis. Inhibits the type I interferon activated signaling pathway. Mechanistically, mono-ADP-ribosylates beta-TrCP/BTRC to promote IFNAR1 ubiquitination and protect BTRC from ubiquitin-proteasome degradation. Additionally, acts as an antiviral factor by cooperating with PARP12 to suppress Zika virus replication, independent of IFNAR1 regulation or intrinsic PARP enzymatic activity. Instead, facilitates the degradation of viral NS1 and NS3 proteins, potentially disrupting viral replication. The sequence is that of Protein mono-ADP-ribosyltransferase PARP11 from Homo sapiens (Human).